The chain runs to 190 residues: Threonylcarbamoyl-AMP synthase (190 aa).

Residues 7 to 190 (SQDVASLVIA…ALSGELIRQG (184 aa)) form the YrdC-like domain.

This sequence belongs to the SUA5 family. TsaC subfamily.

It is found in the cytoplasm. The enzyme catalyses L-threonine + hydrogencarbonate + ATP = L-threonylcarbamoyladenylate + diphosphate + H2O. In terms of biological role, required for the formation of a threonylcarbamoyl group on adenosine at position 37 (t(6)A37) in tRNAs that read codons beginning with adenine. Catalyzes the conversion of L-threonine, HCO(3)(-)/CO(2) and ATP to give threonylcarbamoyl-AMP (TC-AMP) as the acyladenylate intermediate, with the release of diphosphate. This is Threonylcarbamoyl-AMP synthase from Sodalis glossinidius (strain morsitans).